A 285-amino-acid chain; its full sequence is Golgi to ER traffic protein 2 (285 aa).

Residues 1 to 10 are compositionally biased toward basic and acidic residues; that stretch reads MSELTEAEKR. Disordered regions lie at residues 1-72 and 87-106; these read MSEL…KEDS and MQGQGTGKSTPQDSSTPDLL. The residue at position 2 (S2) is an N-acetylserine. Residues 2–148 are Cytoplasmic-facing; that stretch reads SELTEAEKRR…LDYHDYLLNR (147 aa). Over residues 11–20 the composition is skewed to basic residues; sequence RLLRERRQKK. The span at 24 to 42 shows a compositional bias: polar residues; it reads GGASSRLNKITGQASSHLN. S45 is subject to Phosphoserine. The segment covering 49-60 has biased composition (low complexity); it reads APSAAKTTPPAS. Polar residues predominate over residues 93-104; the sequence is GKSTPQDSSTPD. The helical transmembrane segment at 149–169 threads the bilayer; the sequence is LKAWTILVKWVFFLLPYLYLI. Residues 170-196 are Lumenal-facing; it reads TRPNSSVWPAYAFTQSAWFAPLRNPSN. N-linked (GlcNAc...) asparagine glycans are attached at residues N173 and N196. The helical transmembrane segment at 197 to 216 threads the bilayer; that stretch reads FTRIFATFEFLSISIYYQLL. At 217–263 the chain is on the cytoplasmic side; the sequence is KNVEHKSKIKNLQDTNKLVKLVSLVPEGVIPVANLKGKLITLLQYWD. Residues 264–284 form a helical membrane-spanning segment; that stretch reads LLSMLITDISFVLIVLGLLTY. L285 is a topological domain (lumenal).

This sequence belongs to the GET2 family. In terms of assembly, component of the Golgi to ER traffic (GET) complex, which is composed of GET1, GET2 and GET3. Within the complex, GET1 and GET2 form a heterotetramer which is stabilized by phosphatidylinositol binding and which binds to the GET3 homodimer.

It localises to the endoplasmic reticulum membrane. It is found in the golgi apparatus membrane. Required for the post-translational delivery of tail-anchored (TA) proteins to the endoplasmic reticulum. Together with GET1, acts as a membrane receptor for soluble GET3, which recognizes and selectively binds the transmembrane domain of TA proteins in the cytosol. The GET complex cooperates with the HDEL receptor ERD2 to mediate the ATP-dependent retrieval of resident ER proteins that contain a C-terminal H-D-E-L retention signal from the Golgi to the ER. Involved in DNA replication and DNA damage response and also in cell wall function. This chain is Golgi to ER traffic protein 2, found in Saccharomyces cerevisiae (strain RM11-1a) (Baker's yeast).